Here is a 332-residue protein sequence, read N- to C-terminus: Phosphate acyltransferase (332 aa).

It belongs to the PlsX family. As to quaternary structure, homodimer. Probably interacts with PlsY.

The protein resides in the cytoplasm. The enzyme catalyses a fatty acyl-[ACP] + phosphate = an acyl phosphate + holo-[ACP]. Its pathway is lipid metabolism; phospholipid metabolism. Catalyzes the reversible formation of acyl-phosphate (acyl-PO(4)) from acyl-[acyl-carrier-protein] (acyl-ACP). This enzyme utilizes acyl-ACP as fatty acyl donor, but not acyl-CoA. This Thermoanaerobacter pseudethanolicus (strain ATCC 33223 / 39E) (Clostridium thermohydrosulfuricum) protein is Phosphate acyltransferase.